A 104-amino-acid chain; its full sequence is Large ribosomal subunit protein uL24 (104 aa).

The protein belongs to the universal ribosomal protein uL24 family. Part of the 50S ribosomal subunit.

Functionally, one of two assembly initiator proteins, it binds directly to the 5'-end of the 23S rRNA, where it nucleates assembly of the 50S subunit. Its function is as follows. One of the proteins that surrounds the polypeptide exit tunnel on the outside of the subunit. This chain is Large ribosomal subunit protein uL24, found in Buchnera aphidicola subsp. Acyrthosiphon pisum (strain 5A).